A 232-amino-acid polypeptide reads, in one-letter code: Clarin-1 (232 aa).

Residues 8-28 traverse the membrane as a helical segment; it reads IIFCMAGVLSFLCALGVVTAV. A glycan (N-linked (GlcNAc...) asparagine) is linked at N48. A run of 2 helical transmembrane segments spans residues 101–121 and 135–155; these read IILF…FFMY and LGLY…MILF. Residue N184 is glycosylated (N-linked (GlcNAc...) asparagine). A helical transmembrane segment spans residues 186–206; sequence TTSFWVVFICFFVHFLNGLLI.

This sequence belongs to the clarin family.

It is found in the cell membrane. Functionally, may have a role in the excitatory ribbon synapse junctions between hair cells and cochlear ganglion cells and presumably also in analogous synapses within the retina. The sequence is that of Clarin-1 (Clrn1) from Mus musculus (Mouse).